The following is a 506-amino-acid chain: Chromosomal replication initiator protein DnaA (506 aa).

Positions 1 to 77 are domain I, interacts with DnaA modulators; it reads MECATTATTP…IWAEESGAKR (77 aa). The domain II stretch occupies residues 77–162; that stretch reads RRVDLAVRNA…AVAGDVASGS (86 aa). Composition is skewed to basic and acidic residues over residues 103–112 and 121–142; these read TERTDMHSGD and SDGR…RAVE. The tract at residues 103–142 is disordered; that stretch reads TERTDMHSGDTRQQSARISDGRSTDARGADGRGSDARAVE. A domain III, AAA+ region region spans residues 163-384; that stretch reads PLDARLTFET…GALNKLLAFN (222 aa). Residues Gly210, Gly212, Lys213, and Thr214 each coordinate ATP. The domain IV, binds dsDNA stretch occupies residues 385–506; that stretch reads QLTGEPVTLE…EVLKRLALEA (122 aa).

It belongs to the DnaA family. Oligomerizes as a right-handed, spiral filament on DNA at oriC.

The protein resides in the cytoplasm. Functionally, plays an essential role in the initiation and regulation of chromosomal replication. ATP-DnaA binds to the origin of replication (oriC) to initiate formation of the DNA replication initiation complex once per cell cycle. Binds the DnaA box (a 9 base pair repeat at the origin) and separates the double-stranded (ds)DNA. Forms a right-handed helical filament on oriC DNA; dsDNA binds to the exterior of the filament while single-stranded (ss)DNA is stabiized in the filament's interior. The ATP-DnaA-oriC complex binds and stabilizes one strand of the AT-rich DNA unwinding element (DUE), permitting loading of DNA polymerase. After initiation quickly degrades to an ADP-DnaA complex that is not apt for DNA replication. Binds acidic phospholipids. The polypeptide is Chromosomal replication initiator protein DnaA (Xanthobacter autotrophicus (strain ATCC BAA-1158 / Py2)).